We begin with the raw amino-acid sequence, 97 residues long: Aspartyl/glutamyl-tRNA(Asn/Gln) amidotransferase subunit C (97 aa).

The protein belongs to the GatC family. As to quaternary structure, heterotrimer of A, B and C subunits.

It catalyses the reaction L-glutamyl-tRNA(Gln) + L-glutamine + ATP + H2O = L-glutaminyl-tRNA(Gln) + L-glutamate + ADP + phosphate + H(+). The catalysed reaction is L-aspartyl-tRNA(Asn) + L-glutamine + ATP + H2O = L-asparaginyl-tRNA(Asn) + L-glutamate + ADP + phosphate + 2 H(+). Allows the formation of correctly charged Asn-tRNA(Asn) or Gln-tRNA(Gln) through the transamidation of misacylated Asp-tRNA(Asn) or Glu-tRNA(Gln) in organisms which lack either or both of asparaginyl-tRNA or glutaminyl-tRNA synthetases. The reaction takes place in the presence of glutamine and ATP through an activated phospho-Asp-tRNA(Asn) or phospho-Glu-tRNA(Gln). This Roseiflexus sp. (strain RS-1) protein is Aspartyl/glutamyl-tRNA(Asn/Gln) amidotransferase subunit C.